The primary structure comprises 264 residues: Cysteine-rich repeat secretory protein 26 (264 aa).

The N-terminal stretch at 1-27 (MSSNIFGSVPILVVVAIQLLLVHNVSS) is a signal peptide. 2 Gnk2-homologous domains span residues 34–142 (YLNH…SVDS) and 148–261 (YKRM…LYPF).

It belongs to the cysteine-rich repeat secretory protein family.

Its subcellular location is the secreted. This chain is Cysteine-rich repeat secretory protein 26 (CRRSP26), found in Arabidopsis thaliana (Mouse-ear cress).